Reading from the N-terminus, the 241-residue chain is Small ribosomal subunit protein eS4 (241 aa).

Positions 43–105 (IPLVMVLRDI…INKTFRVLQD (63 aa)) constitute an S4 RNA-binding domain.

The protein belongs to the eukaryotic ribosomal protein eS4 family.

The polypeptide is Small ribosomal subunit protein eS4 (Methanosphaera stadtmanae (strain ATCC 43021 / DSM 3091 / JCM 11832 / MCB-3)).